A 550-amino-acid polypeptide reads, in one-letter code: MAELTISTEEIRGALERYVSSYTADVSREEVGTVADAGDGIAHVEGLPSTMTNELLEFEDGTLGVALNLDVREIGVVVLGDFGGIEEGQRVKRTGRVLSAPVGDAFLGRVVNALGHPIDGLGDIANEGFRELELQAPNVMARKSVDEPLQTGIKAVDAMTPIGRGQRQLIIGDRKTGKTTVALDTILNQRDNWRSGDPKKQVRCIYVAVGQKASTIASIKGVLEEAGAMEYTTIVASPASDPAGFKYLAPYTGSTIGQHWMYGGKHVLVVFDDLSKQAEAYRAVSLLLRRPPGREAYPGDVFYLHSRLLERCAKLSDEMGGGSMTGLPIIETKANDISAFIPTNVISITDGQIFLETDLFNQGVRPAINVGTSVSRVGGAAQVKPMKKVAGSLRLNLAQYRELEAFAAFASDLDKASRAQLERGSRLVELLKQPNYSPFPVEEQVVSVWAGTEGRLDDIPVGEIRRFESEFLQYLRHKHEGVLAGIAAGTWGDEIIASLDAAISDFKNLFLGKEDEQRVNEPPAKPLAGEENRETVTRFRDGTTDRPAES.

Position 172–179 (172–179 (GDRKTGKT)) interacts with ATP. Residues 514–550 (EDEQRVNEPPAKPLAGEENRETVTRFRDGTTDRPAES) are disordered. Positions 528-550 (AGEENRETVTRFRDGTTDRPAES) are enriched in basic and acidic residues.

It belongs to the ATPase alpha/beta chains family. F-type ATPases have 2 components, CF(1) - the catalytic core - and CF(0) - the membrane proton channel. CF(1) has five subunits: alpha(3), beta(3), gamma(1), delta(1), epsilon(1). CF(0) has three main subunits: a(1), b(2) and c(9-12). The alpha and beta chains form an alternating ring which encloses part of the gamma chain. CF(1) is attached to CF(0) by a central stalk formed by the gamma and epsilon chains, while a peripheral stalk is formed by the delta and b chains.

Its subcellular location is the cell membrane. The enzyme catalyses ATP + H2O + 4 H(+)(in) = ADP + phosphate + 5 H(+)(out). Functionally, produces ATP from ADP in the presence of a proton gradient across the membrane. The alpha chain is a regulatory subunit. This is ATP synthase subunit alpha from Salinispora arenicola (strain CNS-205).